The primary structure comprises 172 residues: 3-hydroxydecanoyl-[acyl-carrier-protein] dehydratase (172 aa).

Residue H71 is part of the active site.

It belongs to the thioester dehydratase family. FabA subfamily. In terms of assembly, homodimer.

It localises to the cytoplasm. It catalyses the reaction a (3R)-hydroxyacyl-[ACP] = a (2E)-enoyl-[ACP] + H2O. The enzyme catalyses (3R)-hydroxydecanoyl-[ACP] = (2E)-decenoyl-[ACP] + H2O. The catalysed reaction is (2E)-decenoyl-[ACP] = (3Z)-decenoyl-[ACP]. It functions in the pathway lipid metabolism; fatty acid biosynthesis. In terms of biological role, necessary for the introduction of cis unsaturation into fatty acids. Catalyzes the dehydration of (3R)-3-hydroxydecanoyl-ACP to E-(2)-decenoyl-ACP and then its isomerization to Z-(3)-decenoyl-ACP. Can catalyze the dehydratase reaction for beta-hydroxyacyl-ACPs with saturated chain lengths up to 16:0, being most active on intermediate chain length. This chain is 3-hydroxydecanoyl-[acyl-carrier-protein] dehydratase, found in Vibrio parahaemolyticus serotype O3:K6 (strain RIMD 2210633).